Consider the following 429-residue polypeptide: Glutamate-1-semialdehyde 2,1-aminomutase (429 aa).

Residue lysine 265 is modified to N6-(pyridoxal phosphate)lysine.

Belongs to the class-III pyridoxal-phosphate-dependent aminotransferase family. HemL subfamily. As to quaternary structure, homodimer. It depends on pyridoxal 5'-phosphate as a cofactor.

Its subcellular location is the cytoplasm. The enzyme catalyses (S)-4-amino-5-oxopentanoate = 5-aminolevulinate. It functions in the pathway porphyrin-containing compound metabolism; protoporphyrin-IX biosynthesis; 5-aminolevulinate from L-glutamyl-tRNA(Glu): step 2/2. This chain is Glutamate-1-semialdehyde 2,1-aminomutase, found in Alkalilimnicola ehrlichii (strain ATCC BAA-1101 / DSM 17681 / MLHE-1).